Consider the following 423-residue polypeptide: Glucose-1-phosphate adenylyltransferase (423 aa).

Alpha-D-glucose 1-phosphate contacts are provided by residues tyrosine 108, glycine 173, 188-189, and serine 207; that span reads EK.

This sequence belongs to the bacterial/plant glucose-1-phosphate adenylyltransferase family. As to quaternary structure, homotetramer.

The enzyme catalyses alpha-D-glucose 1-phosphate + ATP + H(+) = ADP-alpha-D-glucose + diphosphate. The protein operates within glycan biosynthesis; glycogen biosynthesis. Its function is as follows. Involved in the biosynthesis of ADP-glucose, a building block required for the elongation reactions to produce glycogen. Catalyzes the reaction between ATP and alpha-D-glucose 1-phosphate (G1P) to produce pyrophosphate and ADP-Glc. This Francisella tularensis subsp. mediasiatica (strain FSC147) protein is Glucose-1-phosphate adenylyltransferase.